We begin with the raw amino-acid sequence, 553 residues long: Formate--tetrahydrofolate ligase (553 aa).

Thr65–Ser72 contributes to the ATP binding site.

It belongs to the formate--tetrahydrofolate ligase family.

The enzyme catalyses (6S)-5,6,7,8-tetrahydrofolate + formate + ATP = (6R)-10-formyltetrahydrofolate + ADP + phosphate. It participates in one-carbon metabolism; tetrahydrofolate interconversion. The protein is Formate--tetrahydrofolate ligase of Brachyspira hyodysenteriae (strain ATCC 49526 / WA1).